A 687-amino-acid polypeptide reads, in one-letter code: Solute carrier organic anion transporter family member 1B2 (687 aa).

Topologically, residues 1 to 28 are cytoplasmic; it reads MDHTQQSRKAAEAQPSRSKQTRFCDGFK. A helical membrane pass occupies residues 29–48; sequence LFLAALSFSYICKALGGVVM. Over 49 to 67 the chain is Extracellular; the sequence is KSSITQIERRFDIPSSISG. The helical transmembrane segment at 68–88 threads the bilayer; it reads LIDGGFEIGNLLVIVFVSYFG. Over 89–94 the chain is Cytoplasmic; the sequence is SKLHRP. The helical transmembrane segment at 95–119 threads the bilayer; that stretch reads KLIGIGCFIMGIGSILTALPHFFMG. Over 120–165 the chain is Extracellular; sequence YYKYAKENDIGSLGNSTLTCFINQMTSPTGPSPEIVEKGCEKGLKS. Residue Asn-134 is glycosylated (N-linked (GlcNAc...) asparagine). The chain crosses the membrane as a helical span at residues 166–194; it reads HMWIYVLMGNMLRGIGETPIVPLGISYLD. The Cytoplasmic portion of the chain corresponds to 195-213; it reads DFAKEGHTSMHLGTLHTIA. A helical transmembrane segment spans residues 214–234; it reads MIGPILGFIMSSVFAKIYVDV. Topologically, residues 235–252 are extracellular; the sequence is GYVDLNSVRITPNDARWV. A helical membrane pass occupies residues 253–277; it reads GAWWLSFIVNGLLCITSSIPFFFLP. The Cytoplasmic segment spans residues 278–328; that stretch reads KIPKRSQEERKNSVSLHAPKTDEEKKHMTNLTKQEEQDPSNMTGFLRSLRS. The tract at residues 286 to 311 is disordered; the sequence is ERKNSVSLHAPKTDEEKKHMTNLTKQ. Ser-290 and Ser-292 each carry phosphoserine. Residues 329 to 350 traverse the membrane as a helical segment; sequence ILTNEIYVIFLILTLLQVSGFI. At 351-370 the chain is on the extracellular side; it reads GSFTYLFKFIEQQFGRTASQ. Residues 371–394 form a helical membrane-spanning segment; it reads ANFLLGIITIPTMATAMFLGGYIV. At 395-398 the chain is on the cytoplasmic side; that stretch reads KKFK. A helical transmembrane segment spans residues 399–422; the sequence is LTSVGIAKFVFFTSSVAYAFQFLY. Residues 423–531 lie on the Extracellular side of the membrane; the sequence is FPLLCENKPF…YKCKTNYYFY (109 aa). Residues 450 to 507 form the Kazal-like domain; sequence DVPLSYCNSDCSCDKNQWEPICGENGVTYISPCLAGCKSFRGDKKPNNTEFYDCSCIS. 3 disulfides stabilise this stretch: Cys-456–Cys-486, Cys-462–Cys-482, and Cys-471–Cys-505. N-linked (GlcNAc...) asparagine glycans are attached at residues Asn-496 and Asn-511. The helical transmembrane segment at 532 to 554 threads the bilayer; that stretch reads IILQVTVSFFTAMGSPSLILILM. At 555 to 563 the chain is on the cytoplasmic side; sequence KSVQPELKS. Residues 564–589 form a helical membrane-spanning segment; the sequence is LAMGFHSLIIRALGGILAPIYYGAFI. The Extracellular segment spans residues 590–623; the sequence is DRTCIKWSVTSCGKRGACRLYNSRLFGFSYLGLN. Residues 624 to 641 traverse the membrane as a helical segment; it reads LALKTPPLFLYVVLIYFT. Residues 642 to 687 lie on the Cytoplasmic side of the membrane; it reads KRKYKRNDNKTLENGRQFTDEGNPDSVNKNGYYCVPYDEQSNETPL. A Phosphothreonine modification is found at Thr-660. Ser-667 carries the phosphoserine modification.

This sequence belongs to the organo anion transporter (TC 2.A.60) family. As to expression, liver specific. Expression is highest in central perivenous hepatocytes and lowest in the periportal region. Isoform 1 predominates. Not detected in heart, brain, kidney, skeletal muscle, lung, testis or spleen.

The protein resides in the basolateral cell membrane. It carries out the reaction estrone 3-sulfate(out) = estrone 3-sulfate(in). The catalysed reaction is taurocholate(out) = taurocholate(in). It catalyses the reaction prostaglandin E2(out) = prostaglandin E2(in). The enzyme catalyses L-thyroxine(out) = L-thyroxine(in). Its function is as follows. Mediates the Na(+)-independent uptake of organic anions such as taurochlate, bromosulfophthalein and steroid conjugates (estrone 3-sulfate, 17-beta-glucuronosyl estradiol, dehydroepiandrosterone sulfate). Also transports prostaglandin E2 and L-thyroxine (T4). Shows a pH-sensitive substrate specificity which may be ascribed to the protonation state of the binding site and leads to a stimulation of substrate transport in an acidic microenvironment. Hydrogencarbonate/HCO3(-) acts as the probable counteranion that exchanges for organic anions. The polypeptide is Solute carrier organic anion transporter family member 1B2 (Slco1b2) (Rattus norvegicus (Rat)).